A 142-amino-acid polypeptide reads, in one-letter code: Large ribosomal subunit protein uL11 (142 aa).

Belongs to the universal ribosomal protein uL11 family. In terms of assembly, part of the ribosomal stalk of the 50S ribosomal subunit. Interacts with L10 and the large rRNA to form the base of the stalk. L10 forms an elongated spine to which L12 dimers bind in a sequential fashion forming a multimeric L10(L12)X complex. Post-translationally, one or more lysine residues are methylated.

Functionally, forms part of the ribosomal stalk which helps the ribosome interact with GTP-bound translation factors. The chain is Large ribosomal subunit protein uL11 from Shewanella oneidensis (strain ATCC 700550 / JCM 31522 / CIP 106686 / LMG 19005 / NCIMB 14063 / MR-1).